Reading from the N-terminus, the 363-residue chain is MSYGLLRPLLFTLDPERAHTLSIAALEALGHMPRGLARVARRYTAHDPRLAQDFWGLHFANPVGLAAGYDKDARATAALPALGFGFIEIGTVTPRPQPGNPRPRVFRYPAQQAVINRMGFPGEGAAAVARRLAALPGHPVPIGINLGKNKDTPLERAQDDYVAALELLFHYGDYLCINVSSPNTPGLRLLQGEEALRGLLKAVAAANQRLALQHQRPPLPLLLKIAPDLDNDDLNAIGSLALGTAPLVNGFIATNTTIERPASQPGLSESGGLSGAPLLQQSNAVIAQLYRATQGQVPIIGVGGILSAADAYAKILAGASLVQVYSGLIFRGPGLVREILEELPGLWLKDGYPDLAHARGSTA.

FMN-binding positions include 67–71 (AGYDK) and Thr-91. Residue Lys-71 participates in substrate binding. 116–120 (NRMGF) lines the substrate pocket. The FMN site is built by Asn-145 and Asn-178. Position 178 (Asn-178) interacts with substrate. The Nucleophile role is filled by Ser-181. Asn-183 contributes to the substrate binding site. Residues Lys-224 and Thr-254 each coordinate FMN. Residue 255–256 (NT) coordinates substrate. Residues Gly-275, Gly-304, and 325–326 (YS) each bind FMN.

The protein belongs to the dihydroorotate dehydrogenase family. Type 2 subfamily. Monomer. FMN is required as a cofactor.

It is found in the cell membrane. It catalyses the reaction (S)-dihydroorotate + a quinone = orotate + a quinol. It participates in pyrimidine metabolism; UMP biosynthesis via de novo pathway; orotate from (S)-dihydroorotate (quinone route): step 1/1. In terms of biological role, catalyzes the conversion of dihydroorotate to orotate with quinone as electron acceptor. This is Dihydroorotate dehydrogenase (quinone) from Acidithiobacillus ferrooxidans (strain ATCC 23270 / DSM 14882 / CIP 104768 / NCIMB 8455) (Ferrobacillus ferrooxidans (strain ATCC 23270)).